Consider the following 942-residue polypeptide: Valine--tRNA ligase (942 aa).

A 'HIGH' region motif is present at residues 43–53 (PNVTGTLHMGH). The short motif at 551–555 (KMSKS) is the 'KMSKS' region element. Lys-554 provides a ligand contact to ATP. The stretch at 876 to 942 (EGLVDLDAER…AGLREQRAKL (67 aa)) forms a coiled coil.

The protein belongs to the class-I aminoacyl-tRNA synthetase family. ValS type 1 subfamily. As to quaternary structure, monomer.

It localises to the cytoplasm. The enzyme catalyses tRNA(Val) + L-valine + ATP = L-valyl-tRNA(Val) + AMP + diphosphate. Catalyzes the attachment of valine to tRNA(Val). As ValRS can inadvertently accommodate and process structurally similar amino acids such as threonine, to avoid such errors, it has a 'posttransfer' editing activity that hydrolyzes mischarged Thr-tRNA(Val) in a tRNA-dependent manner. This Stenotrophomonas maltophilia (strain K279a) protein is Valine--tRNA ligase.